Reading from the N-terminus, the 272-residue chain is 3-methyl-2-oxobutanoate hydroxymethyltransferase (272 aa).

2 residues coordinate Mg(2+): D43 and D82. 3-methyl-2-oxobutanoate contacts are provided by residues 43–44 (DS), D82, and K112. E114 provides a ligand contact to Mg(2+). E179 acts as the Proton acceptor in catalysis.

Belongs to the PanB family. In terms of assembly, homodecamer; pentamer of dimers. The cofactor is Mg(2+).

Its subcellular location is the cytoplasm. It catalyses the reaction 3-methyl-2-oxobutanoate + (6R)-5,10-methylene-5,6,7,8-tetrahydrofolate + H2O = 2-dehydropantoate + (6S)-5,6,7,8-tetrahydrofolate. It functions in the pathway cofactor biosynthesis; (R)-pantothenate biosynthesis; (R)-pantoate from 3-methyl-2-oxobutanoate: step 1/2. Functionally, catalyzes the reversible reaction in which hydroxymethyl group from 5,10-methylenetetrahydrofolate is transferred onto alpha-ketoisovalerate to form ketopantoate. The sequence is that of 3-methyl-2-oxobutanoate hydroxymethyltransferase from Staphylococcus aureus (strain COL).